A 324-amino-acid chain; its full sequence is Probable metal transport system membrane protein CPn_0346/CP_0414/CPj0346/CpB0353 (324 aa).

Transmembrane regions (helical) follow at residues 1–21 (MALGPSPYYGVSFFQFFSVFF), 39–59 (IQIIVFLAISCSGAFAGTFLV), 64–84 (AMYANAVSHTVLFGLVCVCLF), 94–114 (GTLTLAAMATAMLTGFLIYFI), 125–145 (STALVFSLLFSLSLVLLVFMT), 165–185 (EDIFPVTIVILANAVITIFAF), 201–221 (LGIPIRLVDYLIIFQLSACLV), 226–246 (AVGVLMALAFLIIPSLIAKVI), 252–272 (SLMAWSLVFSIGTAFLAPASS), and 286–306 (SGISVVFLTMMYIVVKFISYF).

This sequence belongs to the ABC-3 integral membrane protein family.

Its subcellular location is the cell inner membrane. In terms of biological role, part of an ATP-driven transport system CPn_0346/CPn_0347/CPn_0348/CPn_0349 for a metal. This Chlamydia pneumoniae (Chlamydophila pneumoniae) protein is Probable metal transport system membrane protein CPn_0346/CP_0414/CPj0346/CpB0353.